Here is a 464-residue protein sequence, read N- to C-terminus: ATP synthase subunit beta (464 aa).

Residue 148–155 (GGAGVGKT) coordinates ATP.

The protein belongs to the ATPase alpha/beta chains family. As to quaternary structure, F-type ATPases have 2 components, CF(1) - the catalytic core - and CF(0) - the membrane proton channel. CF(1) has five subunits: alpha(3), beta(3), gamma(1), delta(1), epsilon(1). CF(0) has three main subunits: a(1), b(2) and c(9-12). The alpha and beta chains form an alternating ring which encloses part of the gamma chain. CF(1) is attached to CF(0) by a central stalk formed by the gamma and epsilon chains, while a peripheral stalk is formed by the delta and b chains.

The protein resides in the cell inner membrane. The enzyme catalyses ATP + H2O + 4 H(+)(in) = ADP + phosphate + 5 H(+)(out). Produces ATP from ADP in the presence of a proton gradient across the membrane. The catalytic sites are hosted primarily by the beta subunits. In Acinetobacter baylyi (strain ATCC 33305 / BD413 / ADP1), this protein is ATP synthase subunit beta.